We begin with the raw amino-acid sequence, 145 residues long: MSLAEFDADVVVDARDCIMGRVASNVAERALAGDRVAVVNAEQAVITGTEDDVFSTYRTRANLGSDRGPYYPKRPDGIFKRAIRGMLPYKQDDGREALDSVRVYVGNPMDEDGDVLDGTSLDRLSTIRFVTLSEVSEELGANVTW.

It belongs to the universal ribosomal protein uL13 family. In terms of assembly, part of the 50S ribosomal subunit.

Its function is as follows. This protein is one of the early assembly proteins of the 50S ribosomal subunit, although it is not seen to bind rRNA by itself. It is important during the early stages of 50S assembly. The polypeptide is Large ribosomal subunit protein uL13 (Halobacterium salinarum (strain ATCC 700922 / JCM 11081 / NRC-1) (Halobacterium halobium)).